We begin with the raw amino-acid sequence, 405 residues long: Argininosuccinate synthase (405 aa).

Residue 8 to 16 (AYSGGLDTS) participates in ATP binding. L-citrulline is bound by residues Tyr-86 and Ser-91. Gly-116 serves as a coordination point for ATP. 3 residues coordinate L-aspartate: Thr-118, Asn-122, and Asp-123. Asn-122 lines the L-citrulline pocket. Residues Arg-126, Ser-175, Ser-184, Glu-260, and Tyr-272 each coordinate L-citrulline.

The protein belongs to the argininosuccinate synthase family. Type 1 subfamily. As to quaternary structure, homotetramer.

It localises to the cytoplasm. It catalyses the reaction L-citrulline + L-aspartate + ATP = 2-(N(omega)-L-arginino)succinate + AMP + diphosphate + H(+). The protein operates within amino-acid biosynthesis; L-arginine biosynthesis; L-arginine from L-ornithine and carbamoyl phosphate: step 2/3. This is Argininosuccinate synthase from Koribacter versatilis (strain Ellin345).